The following is a 60-amino-acid chain: Large ribosomal subunit protein uL30 (60 aa).

The protein belongs to the universal ribosomal protein uL30 family. In terms of assembly, part of the 50S ribosomal subunit.

This chain is Large ribosomal subunit protein uL30, found in Desulforapulum autotrophicum (strain ATCC 43914 / DSM 3382 / VKM B-1955 / HRM2) (Desulfobacterium autotrophicum).